The primary structure comprises 445 residues: Phosphoglucosamine mutase (445 aa).

Serine 102 (phosphoserine intermediate) is an active-site residue. Mg(2+) is bound by residues serine 102, aspartate 241, aspartate 243, and aspartate 245. The residue at position 102 (serine 102) is a Phosphoserine.

It belongs to the phosphohexose mutase family. The cofactor is Mg(2+). Activated by phosphorylation.

It carries out the reaction alpha-D-glucosamine 1-phosphate = D-glucosamine 6-phosphate. In terms of biological role, catalyzes the conversion of glucosamine-6-phosphate to glucosamine-1-phosphate. The polypeptide is Phosphoglucosamine mutase (Shewanella denitrificans (strain OS217 / ATCC BAA-1090 / DSM 15013)).